The following is a 94-amino-acid chain: MGSELETAMETLINVFHAHSGKEGDKYKLSKKELKELLQTELSGFLDAQKDADAVDKVMKELDENGDGEVDFQEYVVLVAALTVACNNFFWENS.

The residue at position 2 (Gly-2) is a Blocked amino end (Gly). 2 EF-hand domains span residues 13–48 (INVFHAHSGKEGDKYKLSKKELKELLQTELSGFLDA) and 50–85 (KDADAVDKVMKELDENGDGEVDFQEYVVLVAALTVA). Positions 28, 33, 63, 65, 67, 69, and 74 each coordinate Ca(2+). Cys-86 carries the post-translational modification S-nitrosocysteine.

The protein belongs to the S-100 family. Dimer of either two alpha chains, or two beta chains, or one alpha and one beta chain. Also forms heterodimers with S100P. Interacts with AGER. Interacts with CAPZA1. Interacts with FKBP4. Interacts with RYR1 and RYR2. Interacts with CACYBP in a calcium-dependent manner. Interacts with PPP5C (via TPR repeats); the interaction is calcium-dependent and modulates PPP5C activity. Interacts with ATP2A2 and PLN in a Ca(2+)-dependent manner. Interacts with mitochondrial F1-ATPase subunits ATP5F1A and ATP5F1B; these interactions increase F1-ATPase activity. In terms of processing, glutathionylated; glutathionylation increases affinity to calcium about 10-fold. Although predominant among the water-soluble brain proteins, S100 is also found in a variety of other tissues.

It localises to the cytoplasm. The protein localises to the sarcoplasmic reticulum. The protein resides in the mitochondrion. Functionally, small calcium binding protein that plays important roles in several biological processes such as Ca(2+) homeostasis, chondrocyte biology and cardiomyocyte regulation. In response to an increase in intracellular Ca(2+) levels, binds calcium which triggers conformational changes. These changes allow interactions with specific target proteins and modulate their activity. Regulates a network in cardiomyocytes controlling sarcoplasmic reticulum Ca(2+) cycling and mitochondrial function through interaction with the ryanodine receptors RYR1 and RYR2, sarcoplasmic reticulum Ca(2+)-ATPase/ATP2A2 and mitochondrial F1-ATPase. Facilitates diastolic Ca(2+) dissociation and myofilament mechanics in order to improve relaxation during diastole. The sequence is that of Protein S100-A1 (S100A1) from Bos taurus (Bovine).